The chain runs to 451 residues: UDP-N-acetylmuramoylalanine--D-glutamate ligase (451 aa).

ATP is bound at residue 119 to 125; the sequence is GSNGKTT.

It belongs to the MurCDEF family.

The protein localises to the cytoplasm. It carries out the reaction UDP-N-acetyl-alpha-D-muramoyl-L-alanine + D-glutamate + ATP = UDP-N-acetyl-alpha-D-muramoyl-L-alanyl-D-glutamate + ADP + phosphate + H(+). The protein operates within cell wall biogenesis; peptidoglycan biosynthesis. In terms of biological role, cell wall formation. Catalyzes the addition of glutamate to the nucleotide precursor UDP-N-acetylmuramoyl-L-alanine (UMA). The polypeptide is UDP-N-acetylmuramoylalanine--D-glutamate ligase (Bacillus cytotoxicus (strain DSM 22905 / CIP 110041 / 391-98 / NVH 391-98)).